The chain runs to 547 residues: T-complex protein 1 subunit alpha (547 aa).

It belongs to the TCP-1 chaperonin family. In terms of assembly, heterooligomeric complex of about 850 to 900 kDa that forms two stacked rings, 12 to 16 nm in diameter.

The protein resides in the cytoplasm. Molecular chaperone; assists the folding of proteins upon ATP hydrolysis. Known to play a role, in vitro, in the folding of actin and tubulin. In Tetrahymena pyriformis, this protein is T-complex protein 1 subunit alpha.